The sequence spans 187 residues: Elongation factor P (187 aa).

Belongs to the elongation factor P family.

Its subcellular location is the cytoplasm. It functions in the pathway protein biosynthesis; polypeptide chain elongation. Functionally, involved in peptide bond synthesis. Stimulates efficient translation and peptide-bond synthesis on native or reconstituted 70S ribosomes in vitro. Probably functions indirectly by altering the affinity of the ribosome for aminoacyl-tRNA, thus increasing their reactivity as acceptors for peptidyl transferase. The protein is Elongation factor P of Mycobacterium sp. (strain JLS).